A 387-amino-acid chain; its full sequence is Ubiquitin-conjugating enzyme E2 25 (387 aa).

The segment at 117 to 164 is disordered; the sequence is APPVRDDIDEGRGSDISDTTSEPIDDDMAGDGEVDDDDEEEEDDEDAD. A compositionally biased stretch (basic and acidic residues) spans 120–131; it reads VRDDIDEGRGSD. A compositionally biased stretch (acidic residues) spans 139–164; that stretch reads PIDDDMAGDGEVDDDDEEEEDDEDAD. The UBC core domain occupies 214–380; sequence TATDRLMKEI…QQIHAKSGWY (167 aa). Cys315 (glycyl thioester intermediate) is an active-site residue.

The protein belongs to the ubiquitin-conjugating enzyme family. In terms of tissue distribution, in the embryo, expressed in precursor neuron and muscle cells and in other cells such as hypodermal cells. After hatching of L1 larvae and in all subsequent stages, strongest expression in pharyngeal muscle and anal muscle cells. In L4 larvae and adolescent hermaphrodites, also expressed in the vulval muscles. Expression also detected in all four nerve cords and in neurons with weaker levels in all body wall muscles.

The protein localises to the cytoplasm. It is found in the nucleus. It carries out the reaction S-ubiquitinyl-[E1 ubiquitin-activating enzyme]-L-cysteine + [E2 ubiquitin-conjugating enzyme]-L-cysteine = [E1 ubiquitin-activating enzyme]-L-cysteine + S-ubiquitinyl-[E2 ubiquitin-conjugating enzyme]-L-cysteine.. The protein operates within protein modification; protein ubiquitination. In terms of biological role, catalyzes the covalent attachment of ubiquitin to other proteins (Potential). Required for the maintenance of neuromuscular function. This is Ubiquitin-conjugating enzyme E2 25 from Caenorhabditis elegans.